The sequence spans 287 residues: Putative esterase/lipase HI_0193 (287 aa).

Positions proline 47 to proline 273 constitute an AB hydrolase-1 domain. Residues serine 119 and histidine 266 contribute to the active site.

This sequence belongs to the DmpD/TodF/XylF esterase family.

The sequence is that of Putative esterase/lipase HI_0193 from Haemophilus influenzae (strain ATCC 51907 / DSM 11121 / KW20 / Rd).